The primary structure comprises 124 residues: UPF0102 protein Mmc1_3298 (124 aa).

The protein belongs to the UPF0102 family.

This Magnetococcus marinus (strain ATCC BAA-1437 / JCM 17883 / MC-1) protein is UPF0102 protein Mmc1_3298.